Consider the following 143-residue polypeptide: Lysozyme C (143 aa).

An N-terminal signal peptide occupies residues 1-15 (MKIPVFLLLLALANA). The C-type lysozyme domain occupies 16 to 143 (KVFQRCEWAR…LSAYIAGCGL (128 aa)). 4 disulfides stabilise this stretch: C21/C141, C45/C129, C79/C94, and C90/C108. Catalysis depends on residues E50 and D67.

The protein belongs to the glycosyl hydrolase 22 family. In terms of assembly, monomer.

It is found in the secreted. It carries out the reaction Hydrolysis of (1-&gt;4)-beta-linkages between N-acetylmuramic acid and N-acetyl-D-glucosamine residues in a peptidoglycan and between N-acetyl-D-glucosamine residues in chitodextrins.. Functionally, lysozymes have primarily a bacteriolytic function; those in tissues and body fluids are associated with the monocyte-macrophage system and enhance the activity of immunoagents. The polypeptide is Lysozyme C (Takifugu rubripes (Japanese pufferfish)).